The following is a 209-amino-acid chain: Probable GTP-binding protein EngB (209 aa).

The EngB-type G domain occupies asparagine 23 to proline 198. Residues glycine 31–serine 38, glycine 58–leucine 62, aspartate 76–glycine 79, threonine 143–aspartate 146, and phenylalanine 177–serine 179 contribute to the GTP site. Mg(2+) contacts are provided by serine 38 and threonine 60.

Belongs to the TRAFAC class TrmE-Era-EngA-EngB-Septin-like GTPase superfamily. EngB GTPase family. Requires Mg(2+) as cofactor.

Necessary for normal cell division and for the maintenance of normal septation. This is Probable GTP-binding protein EngB from Azoarcus sp. (strain BH72).